A 617-amino-acid polypeptide reads, in one-letter code: UvrABC system protein C (617 aa).

In terms of domain architecture, GIY-YIG spans 22–100 (NLPGVYRFFN…IKALSPKYNI (79 aa)). Residues 209–244 (DELTRTLQHKMQTAAANLQFEEAARYRDQIQALGIM) form the UVR domain.

Belongs to the UvrC family. As to quaternary structure, interacts with UvrB in an incision complex.

It is found in the cytoplasm. Its function is as follows. The UvrABC repair system catalyzes the recognition and processing of DNA lesions. UvrC both incises the 5' and 3' sides of the lesion. The N-terminal half is responsible for the 3' incision and the C-terminal half is responsible for the 5' incision. The protein is UvrABC system protein C of Neisseria meningitidis serogroup B (strain ATCC BAA-335 / MC58).